Reading from the N-terminus, the 851-residue chain is Phosphatidylinositol 4-kinase pik1 (851 aa).

The PIK helical domain maps to 1 to 123 (MPSSNSGNEL…KICKRLYNRI (123 aa)). Residues Ser-202, Ser-219, Ser-222, and Ser-235 each carry the phosphoserine modification. Tyr-236 bears the Phosphotyrosine mark. Residues 384 to 404 (LQDSTDNDISESESEGGDLSM) form a disordered region. The segment covering 388–399 (TDNDISESESEG) has biased composition (acidic residues). A PI3K/PI4K catalytic domain is found at 558-836 (YAKKERIRKS…LIQKANCSVW (279 aa)). The interval 564-570 (IRKSSPY) is G-loop. A catalytic loop region spans residues 706–714 (QLKDRHNGN). The activation loop stretch occupies residues 725 to 749 (HIDFGFLLTNTPGNVGFESAPFKLT).

Belongs to the PI3/PI4-kinase family. In terms of assembly, interacts with cdc4 and cam2.

The protein resides in the golgi apparatus. It localises to the nucleus. The catalysed reaction is a 1,2-diacyl-sn-glycero-3-phospho-(1D-myo-inositol) + ATP = a 1,2-diacyl-sn-glycero-3-phospho-(1D-myo-inositol 4-phosphate) + ADP + H(+). Its function is as follows. Acts on phosphatidylinositol (PI) in the first committed step in the production of the second messenger inositol 1,4,5,-trisphosphate. PIK1 is part of a nuclear phosphoinositide cycle and could control cytokinesis through the actin cytoskeleton. This Schizosaccharomyces pombe (strain 972 / ATCC 24843) (Fission yeast) protein is Phosphatidylinositol 4-kinase pik1 (pik1).